Here is a 407-residue protein sequence, read N- to C-terminus: S-adenosylmethionine synthase (407 aa).

His15 lines the ATP pocket. Asp17 contributes to the Mg(2+) binding site. Glu43 contributes to the K(+) binding site. Glu56 and Gln100 together coordinate L-methionine. The tract at residues 100–110 (QSPDIAQGVDE) is flexible loop. ATP is bound by residues 171–173 (DGK), 248–249 (KF), Asp257, 263–264 (RK), Ala280, and Lys284. Asp257 provides a ligand contact to L-methionine. Lys288 is an L-methionine binding site.

Belongs to the AdoMet synthase family. In terms of assembly, homotetramer; dimer of dimers. Mg(2+) serves as cofactor. Requires K(+) as cofactor.

It localises to the cytoplasm. It carries out the reaction L-methionine + ATP + H2O = S-adenosyl-L-methionine + phosphate + diphosphate. The protein operates within amino-acid biosynthesis; S-adenosyl-L-methionine biosynthesis; S-adenosyl-L-methionine from L-methionine: step 1/1. Catalyzes the formation of S-adenosylmethionine (AdoMet) from methionine and ATP. The overall synthetic reaction is composed of two sequential steps, AdoMet formation and the subsequent tripolyphosphate hydrolysis which occurs prior to release of AdoMet from the enzyme. The sequence is that of S-adenosylmethionine synthase from Synechococcus sp. (strain RCC307).